The sequence spans 207 residues: Large ribosomal subunit protein bL25 (207 aa).

The protein belongs to the bacterial ribosomal protein bL25 family. CTC subfamily. Part of the 50S ribosomal subunit; part of the 5S rRNA/L5/L18/L25 subcomplex. Contacts the 5S rRNA. Binds to the 5S rRNA independently of L5 and L18.

Its function is as follows. This is one of the proteins that binds to the 5S RNA in the ribosome where it forms part of the central protuberance. This chain is Large ribosomal subunit protein bL25, found in Orientia tsutsugamushi (strain Boryong) (Rickettsia tsutsugamushi).